A 214-amino-acid polypeptide reads, in one-letter code: Small ribosomal subunit protein eS1 (214 aa).

It belongs to the eukaryotic ribosomal protein eS1 family.

In Aeropyrum pernix (strain ATCC 700893 / DSM 11879 / JCM 9820 / NBRC 100138 / K1), this protein is Small ribosomal subunit protein eS1.